Here is a 215-residue protein sequence, read N- to C-terminus: HTH-type transcriptional repressor FabR (215 aa).

The region spanning 10 to 70 (KTRRSLVEAA…TMVDESGLML (61 aa)) is the HTH tetR-type domain. Positions 33–52 (SLREVAREAVIAPTSFYRHF) form a DNA-binding region, H-T-H motif.

In terms of assembly, homodimer.

The protein localises to the cytoplasm. Its function is as follows. Represses the transcription of fabB, involved in unsaturated fatty acid (UFA) biosynthesis. By controlling UFA production, FabR directly influences the physical properties of the membrane bilayer. The sequence is that of HTH-type transcriptional repressor FabR from Escherichia coli (strain K12 / MC4100 / BW2952).